A 475-amino-acid chain; its full sequence is Pyruvate kinase (475 aa).

Substrate is bound at residue arginine 36. The K(+) site is built by asparagine 38, serine 40, and aspartate 70. 38–41 (NFSH) is a binding site for ATP. Residues arginine 77 and lysine 158 each contribute to the ATP site. Glutamate 223 is a Mg(2+) binding site. Positions 246, 247, and 279 each coordinate substrate. Aspartate 247 serves as a coordination point for Mg(2+).

Belongs to the pyruvate kinase family. As to quaternary structure, homotetramer. It depends on a divalent metal cation as a cofactor.

It carries out the reaction pyruvate + ATP = phosphoenolpyruvate + ADP + H(+). It participates in carbohydrate degradation; glycolysis; pyruvate from D-glyceraldehyde 3-phosphate: step 5/5. This chain is Pyruvate kinase (pki), found in Thermococcus litoralis (strain ATCC 51850 / DSM 5473 / JCM 8560 / NS-C).